A 309-amino-acid polypeptide reads, in one-letter code: L-lactate dehydrogenase 2 (309 aa).

NAD(+) is bound by residues valine 16, aspartate 37, tyrosine 67, and 81–82 (GV). Arginine 90 lines the substrate pocket. An NAD(+)-binding site is contributed by serine 103. 122 to 125 (NPVD) contributes to the substrate binding site. An NAD(+)-binding site is contributed by threonine 145. Residue 150-153 (DTAR) participates in substrate binding. Histidine 177 acts as the Proton acceptor in catalysis. Threonine 227 contributes to the substrate binding site.

It belongs to the LDH/MDH superfamily. LDH family. Homotetramer.

The protein resides in the cytoplasm. It carries out the reaction (S)-lactate + NAD(+) = pyruvate + NADH + H(+). Its pathway is fermentation; pyruvate fermentation to lactate; (S)-lactate from pyruvate: step 1/1. In terms of biological role, catalyzes the conversion of lactate to pyruvate. This chain is L-lactate dehydrogenase 2, found in Lactiplantibacillus plantarum (strain ATCC BAA-793 / NCIMB 8826 / WCFS1) (Lactobacillus plantarum).